We begin with the raw amino-acid sequence, 198 residues long: FMN-dependent NADH:quinone oxidoreductase (198 aa).

Residues 92–95 (MWNL) and 136–139 (SRGG) contribute to the FMN site.

This sequence belongs to the azoreductase type 1 family. As to quaternary structure, homodimer. Requires FMN as cofactor.

It carries out the reaction 2 a quinone + NADH + H(+) = 2 a 1,4-benzosemiquinone + NAD(+). The catalysed reaction is N,N-dimethyl-1,4-phenylenediamine + anthranilate + 2 NAD(+) = 2-(4-dimethylaminophenyl)diazenylbenzoate + 2 NADH + 2 H(+). Its function is as follows. Quinone reductase that provides resistance to thiol-specific stress caused by electrophilic quinones. In terms of biological role, also exhibits azoreductase activity. Catalyzes the reductive cleavage of the azo bond in aromatic azo compounds to the corresponding amines. This Clostridium perfringens (strain SM101 / Type A) protein is FMN-dependent NADH:quinone oxidoreductase.